The primary structure comprises 112 residues: Nucleoid-associated protein CV_1611 (112 aa).

It belongs to the YbaB/EbfC family. Homodimer.

The protein localises to the cytoplasm. It is found in the nucleoid. Binds to DNA and alters its conformation. May be involved in regulation of gene expression, nucleoid organization and DNA protection. In Chromobacterium violaceum (strain ATCC 12472 / DSM 30191 / JCM 1249 / CCUG 213 / NBRC 12614 / NCIMB 9131 / NCTC 9757 / MK), this protein is Nucleoid-associated protein CV_1611.